A 363-amino-acid polypeptide reads, in one-letter code: MVLKQRANYLGFLIVFFTAFLVEAVPIKRQSNSTVDSLPPLIPSRTSAPSSSPSTTDPEAPAMSRNGPLPSDVETKYGMALNATSYPDSVVQAMSIDGGIRAATSQEINELTYYTTLSANSYCRTVIPGATWDCIHCDATEDLKIIKTWSTLIYDTNAMVARGDSEKTIYIVFRGSSSIRNWIADLTFVPVSYPPVSGTKVHKGFLDSYGEVQNELVATVLDQFKQYPSYKVAVTGHSLGGATALLCALDLYQREEGLSSSNLFLYTQGQPRVGDPAFANYVVSTGIPYRRTVNERDIVPHLPPAAFGFLHAGEEYWITDNSPETVQVCTSDLETSDCSNSIVPFTSVLDHLSYFGINTGLCT.

The signal sequence occupies residues 1 to 24; that stretch reads MVLKQRANYLGFLIVFFTAFLVEA. Residues 25 to 94 constitute a propeptide that is removed on maturation; sequence VPIKRQSNST…SYPDSVVQAM (70 aa). The segment at 33–69 is disordered; it reads STVDSLPPLIPSRTSAPSSSPSTTDPEAPAMSRNGPL. Residues 43 to 62 show a composition bias toward low complexity; the sequence is PSRTSAPSSSPSTTDPEAPA. Cystine bridges form between Cys-123/Cys-362, Cys-134/Cys-137, and Cys-329/Cys-338. Ser-238 functions as the Nucleophile in the catalytic mechanism. The active-site Charge relay system is Asp-297. Asp-350 is a binding site for Ca(2+). The active-site Charge relay system is the His-351.

It belongs to the AB hydrolase superfamily. Lipase family.

It carries out the reaction a triacylglycerol + H2O = a diacylglycerol + a fatty acid + H(+). In Rhizomucor miehei, this protein is Lipase.